Here is a 251-residue protein sequence, read N- to C-terminus: Probable transcriptional regulatory protein CC_3243 (251 aa).

This sequence belongs to the TACO1 family.

The protein localises to the cytoplasm. This chain is Probable transcriptional regulatory protein CC_3243, found in Caulobacter vibrioides (strain ATCC 19089 / CIP 103742 / CB 15) (Caulobacter crescentus).